We begin with the raw amino-acid sequence, 534 residues long: MAFHGIREVENYFIPFLQRVKSRNEWKKINASIIIHGLSQSSFMVTKMVDFCDKIEDMDYATRLFNQVSNPNVFLYNSIIRAYTHNSLYCDVIRIYKQLLRKSFELPDRFTFPFMFKSCASLGSCYLGKQVHGHLCKFGPRFHVVTENALIDMYMKFDDLVDAHKVFDEMYERDVISWNSLLSGYARLGQMKKAKGLFHLMLDKTIVSWTAMISGYTGIGCYVEAMDFFREMQLAGIEPDEISLISVLPSCAQLGSLELGKWIHLYAERRGFLKQTGVCNALIEMYSKCGVISQAIQLFGQMEGKDVISWSTMISGYAYHGNAHGAIETFNEMQRAKVKPNGITFLGLLSACSHVGMWQEGLRYFDMMRQDYQIEPKIEHYGCLIDVLARAGKLERAVEITKTMPMKPDSKIWGSLLSSCRTPGNLDVALVAMDHLVELEPEDMGNYVLLANIYADLGKWEDVSRLRKMIRNENMKKTPGGSLIEVNNIVQEFVSGDNSKPFWTEISIVLQLFTSHQDQDVITNNNALAFIGIV.

11 PPR repeats span residues 41–71 (SSFM…VSNP), 72–106 (NVFL…SFEL), 108–142 (DRFT…GPRF), 143–173 (HVVT…MYER), 174–208 (DVIS…TIVS), 209–239 (WTAM…GIEP), 240–274 (DEIS…GFLK), 275–305 (QTGV…MEGK), 306–340 (DVIS…KVKP), 341–371 (NGIT…MRQD), and 377–407 (KIEH…MPMK). The segment at 412-487 (IWGSLLSSCR…TPGGSLIEVN (76 aa)) is type E motif. The interval 488 to 518 (NIVQEFVSGDNSKPFWTEISIVLQLFTSHQD) is type E(+) motif.

Belongs to the PPR family. PCMP-E subfamily.

In Arabidopsis thaliana (Mouse-ear cress), this protein is Pentatricopeptide repeat-containing protein At2g20540 (PCMP-E78).